Reading from the N-terminus, the 747-residue chain is Putative ankyrin repeat protein FPV222 (747 aa).

ANK repeat units lie at residues 38–67 (DNCT…DPNI), 103–132 (NYRN…LVNM), 136–165 (KNIT…NTNA), 169–198 (YGET…NVNV), 202–231 (DSIT…DTNA), 234–263 (LERF…NTNV), 294–323 (PCTV…NPDI), 328–357 (TSTY…YTDV), 361–393 (QQNT…SFNL), 397–426 (KGRT…DTNI), 430–460 (MSFT…DPNL), 464–493 (KEVS…DIKP), 495–524 (NECY…ELEV), and 529–559 (DHYV…DLNK).

The chain is Putative ankyrin repeat protein FPV222 from Vertebrata (FPV).